Reading from the N-terminus, the 129-residue chain is MNDLINFEIVTPLGVIYQGEVKSVTLPGSEGEFGVLKGHAALVSSLKSGVIDIEKADLNHELIAIDAGHAKVDEDKICVLAKGAVWVCGSDESEIEKNLAQAKDLIKSMSSDNAALAATFSKLDNARMH.

The protein belongs to the ATPase epsilon chain family. In terms of assembly, F-type ATPases have 2 components, CF(1) - the catalytic core - and CF(0) - the membrane proton channel. CF(1) has five subunits: alpha(3), beta(3), gamma(1), delta(1), epsilon(1). CF(0) has three main subunits: a, b and c.

It localises to the cell inner membrane. Produces ATP from ADP in the presence of a proton gradient across the membrane. This chain is ATP synthase epsilon chain, found in Campylobacter jejuni subsp. jejuni serotype O:2 (strain ATCC 700819 / NCTC 11168).